Here is a 163-residue protein sequence, read N- to C-terminus: Phosphopantetheine adenylyltransferase (163 aa).

Thr-11 is a substrate binding site. Residues 11 to 12 (TF) and His-19 each bind ATP. Substrate is bound by residues Lys-43, Leu-75, and Arg-89. ATP contacts are provided by residues 90-92 (GLR), Glu-100, and 125-131 (YMFISAT).

It belongs to the bacterial CoaD family. Homohexamer. It depends on Mg(2+) as a cofactor.

It localises to the cytoplasm. It carries out the reaction (R)-4'-phosphopantetheine + ATP + H(+) = 3'-dephospho-CoA + diphosphate. Its pathway is cofactor biosynthesis; coenzyme A biosynthesis; CoA from (R)-pantothenate: step 4/5. Reversibly transfers an adenylyl group from ATP to 4'-phosphopantetheine, yielding dephospho-CoA (dPCoA) and pyrophosphate. The sequence is that of Phosphopantetheine adenylyltransferase from Azoarcus sp. (strain BH72).